The sequence spans 976 residues: Vacuolar membrane protease (976 aa).

The Cytoplasmic segment spans residues 1 to 15 (MKLKSVFRSVLKYRK). A helical membrane pass occupies residues 16 to 36 (TNLSLLLLITYSIITLLYIFD). Topologically, residues 37-359 (HERYKLNLPK…KFFVISAKTL (323 aa)) are vacuolar. Residues Asn-96 and Asn-121 are each glycosylated (N-linked (GlcNAc...) asparagine). The Zn(2+) site is built by His-156 and Asp-168. Asn-189 is a glycosylation site (N-linked (GlcNAc...) asparagine). Catalysis depends on Glu-200, which acts as the Proton acceptor. Residue Glu-201 coordinates Zn(2+). N-linked (GlcNAc...) asparagine glycans are attached at residues Asn-212 and Asn-217. Positions 226 and 300 each coordinate Zn(2+). The helical transmembrane segment at 360 to 380 (FYWNCIFLLVSPVVAIGLYLI) threads the bilayer. Residues 381–392 (SRDRMTWKSHSW) are Cytoplasmic-facing. The helical transmembrane segment at 393 to 412 (LSWTRFPLSLAAGIIVQKLF) threads the bilayer. Residues 413-428 (SNDIIRSNPLTFSRNY) are Vacuolar-facing. A helical membrane pass occupies residues 429–449 (FWPISAFFTQVIFTSYVLINC). Residues 450 to 461 (SNFFFPCADMKS) lie on the Cytoplasmic side of the membrane. A helical transmembrane segment spans residues 462–482 (LSIIELFIILWTILLFTSKLL). At 483–496 (YSSDYRYTGLYPLS) the chain is on the vacuolar side. The chain crosses the membrane as a helical span at residues 497 to 517 (IFFLLSTIAAILRLLALALGM). Topologically, residues 518–627 (RTRKRLGREC…NSLKLEYTDY (110 aa)) are cytoplasmic. Residues 528 to 610 (RDHHSNYSSH…PLLKGSNSME (83 aa)) form a disordered region. Residues 549–558 (NLEQPQDQFT) show a composition bias toward polar residues. Residues 559-570 (SSQDDQASIQDD) are compositionally biased toward low complexity. The span at 582 to 601 (NVDEDHGMDSSSQQHDERVP) shows a compositional bias: basic and acidic residues. Residues 628–648 (AWIIQFLLIVPIPSFILFNSV) traverse the membrane as a helical segment. Residues 649–668 (DVIMDALNHTVQEGSKATFD) are Vacuolar-facing. Asn-656 is a glycosylation site (N-linked (GlcNAc...) asparagine). Residues 669-689 (VLRFGMVGSILMALPILPFFY) form a helical membrane-spanning segment. The Cytoplasmic segment spans residues 690–692 (KVN). Residues 693–713 (YITISLTALLFLISASKTLLV) traverse the membrane as a helical segment. Over 714–976 (HPFTNSNPLK…LVIVKDAIIL (263 aa)) the chain is Vacuolar. N-linked (GlcNAc...) asparagine glycans are attached at residues Asn-768, Asn-796, Asn-811, Asn-866, and Asn-937.

This sequence belongs to the peptidase M28 family. The cofactor is Zn(2+).

It is found in the vacuole membrane. Functionally, may be involved in vacuolar sorting and osmoregulation. In Saccharomyces cerevisiae (strain RM11-1a) (Baker's yeast), this protein is Vacuolar membrane protease.